Consider the following 69-residue polypeptide: Large ribosomal subunit protein uL29 (69 aa).

This sequence belongs to the universal ribosomal protein uL29 family.

In Clostridium perfringens (strain ATCC 13124 / DSM 756 / JCM 1290 / NCIMB 6125 / NCTC 8237 / Type A), this protein is Large ribosomal subunit protein uL29.